The primary structure comprises 499 residues: Endoglucanase (499 aa).

The N-terminal stretch at 1–29 is a signal peptide; it reads MKRSISIFITCLLIAVLTMGGLLPSPASA. Substrate contacts are provided by residues His65, 69-70, Tyr96, and His131; that span reads WY. Glu169 serves as the catalytic Proton donor. Tyr231 lines the substrate pocket. Glu257 (nucleophile) is an active-site residue. Substrate is bound by residues 263–264, Trp291, and 296–298; these read AS and KQE. Over residues 330 to 340 the composition is skewed to basic and acidic residues; sequence RGTKDSTKDVP. The segment at 330–353 is disordered; that stretch reads RGTKDSTKDVPETPAQDNPTQEKG. One can recognise a CBM3 domain in the interval 350–499; sequence QEKGVSVQYK…GKLIWGTEPN (150 aa).

The protein belongs to the glycosyl hydrolase 5 (cellulase A) family.

The catalysed reaction is Endohydrolysis of (1-&gt;4)-beta-D-glucosidic linkages in cellulose, lichenin and cereal beta-D-glucans.. This chain is Endoglucanase (bglC), found in Bacillus subtilis.